A 182-amino-acid polypeptide reads, in one-letter code: Tropomyosin-like protein (182 aa).

Residues 1 to 68 (FDRYNQILDE…ELEQRRTEQQ (68 aa)) adopt a coiled-coil conformation. Residues 32–66 (DEETKKIKQEEAEMKKKIEGEASRKKLELEQRRTE) show a composition bias toward basic and acidic residues. Disordered stretches follow at residues 32–81 (DEET…GSTD) and 140–160 (DQPA…DAGL). Residues 140-153 (DQPAQAGPEPAAPA) are compositionally biased toward low complexity.

Its subcellular location is the cytoplasm. It is found in the cytoskeleton. The protein is Tropomyosin-like protein of Pichia angusta (Yeast).